The primary structure comprises 139 residues: MAHPCATDPELWFGYPDDDGSDGAAKARAYERSATQARIQCLRRCPLLQQRRCAQHAVEHRVEYGVWAGIKLPGGQYRKREQLAAAHDVLRRIAGGEINSRQLPDNAALLARNEGLEVTPVPGVVVHLPIAQVGPQPAA.

The region spanning 4–77 is the 4Fe-4S Wbl-type domain; the sequence is PCATDPELWF…AGIKLPGGQY (74 aa). The [4Fe-4S] cluster site is built by cysteine 5, cysteine 41, cysteine 45, and cysteine 53.

The protein belongs to the WhiB family. [4Fe-4S] cluster is required as a cofactor. In terms of processing, the Fe-S cluster can be nitrosylated by nitric oxide (NO). Post-translationally, upon Fe-S cluster removal intramolecular disulfide bonds are formed.

It localises to the cytoplasm. Its function is as follows. A transcription factor that is probably redox-responsive. Probably plays a role in immunomodulation and reactivation after chronic infection. Its induction results in transcription of a number of genes including sigM, and the genes for 2 type VII secretion systems ESX-2 and ESX-4. Seems to negatively regulate its own expression. The apo-form has been shown to act as a protein disulfide reductase. The apo- but not holo-form probably binds DNA. The protein is Transcriptional regulator WhiB5 (whiB5) of Mycobacterium tuberculosis (strain ATCC 25618 / H37Rv).